The following is a 424-amino-acid chain: Serine--tRNA ligase (424 aa).

229–231 (TAE) provides a ligand contact to L-serine. ATP is bound by residues 260-262 (RKE) and Val276. Glu283 lines the L-serine pocket. Residue 347 to 350 (ELVS) coordinates ATP. Thr383 provides a ligand contact to L-serine.

This sequence belongs to the class-II aminoacyl-tRNA synthetase family. Type-1 seryl-tRNA synthetase subfamily. In terms of assembly, homodimer. The tRNA molecule binds across the dimer.

It localises to the cytoplasm. It catalyses the reaction tRNA(Ser) + L-serine + ATP = L-seryl-tRNA(Ser) + AMP + diphosphate + H(+). It carries out the reaction tRNA(Sec) + L-serine + ATP = L-seryl-tRNA(Sec) + AMP + diphosphate + H(+). It functions in the pathway aminoacyl-tRNA biosynthesis; selenocysteinyl-tRNA(Sec) biosynthesis; L-seryl-tRNA(Sec) from L-serine and tRNA(Sec): step 1/1. Functionally, catalyzes the attachment of serine to tRNA(Ser). Is also able to aminoacylate tRNA(Sec) with serine, to form the misacylated tRNA L-seryl-tRNA(Sec), which will be further converted into selenocysteinyl-tRNA(Sec). This Methanosphaera stadtmanae (strain ATCC 43021 / DSM 3091 / JCM 11832 / MCB-3) protein is Serine--tRNA ligase.